We begin with the raw amino-acid sequence, 350 residues long: Probable choline kinase 2 (350 aa).

3 residues coordinate ATP: Arg-73, Gln-210, and Asp-227.

Belongs to the choline/ethanolamine kinase family.

It carries out the reaction choline + ATP = phosphocholine + ADP + H(+). It functions in the pathway phospholipid metabolism; phosphatidylcholine biosynthesis; phosphocholine from choline: step 1/1. Functionally, involved in phospholipid biosynthesis. Catalyzes the first step in phosphatidylcholine biosynthesis. The protein is Probable choline kinase 2 of Arabidopsis thaliana (Mouse-ear cress).